Consider the following 254-residue polypeptide: Thiazole synthase (254 aa).

Residue K95 is the Schiff-base intermediate with DXP of the active site. 1-deoxy-D-xylulose 5-phosphate contacts are provided by residues G156, A182–G183, and N204–T205.

Belongs to the ThiG family. Homotetramer. Forms heterodimers with either ThiH or ThiS.

The protein localises to the cytoplasm. It carries out the reaction [ThiS sulfur-carrier protein]-C-terminal-Gly-aminoethanethioate + 2-iminoacetate + 1-deoxy-D-xylulose 5-phosphate = [ThiS sulfur-carrier protein]-C-terminal Gly-Gly + 2-[(2R,5Z)-2-carboxy-4-methylthiazol-5(2H)-ylidene]ethyl phosphate + 2 H2O + H(+). It functions in the pathway cofactor biosynthesis; thiamine diphosphate biosynthesis. Functionally, catalyzes the rearrangement of 1-deoxy-D-xylulose 5-phosphate (DXP) to produce the thiazole phosphate moiety of thiamine. Sulfur is provided by the thiocarboxylate moiety of the carrier protein ThiS. In vitro, sulfur can be provided by H(2)S. This is Thiazole synthase from Shewanella sp. (strain W3-18-1).